Here is a 72-residue protein sequence, read N- to C-terminus: Crustacean hyperglycemic hormone B (72 aa).

Glutamine 1 carries the post-translational modification Pyrrolidone carboxylic acid. A D-phenylalanine; in form CHHB-II modification is found at phenylalanine 3. 3 disulfide bridges follow: cysteine 7-cysteine 43, cysteine 23-cysteine 39, and cysteine 26-cysteine 52. The residue at position 72 (valine 72) is a Valine amide.

Post-translationally, stereoinversion of L-Phe (in CHHB-I) to D-Phe (in CHHB-II).

It is found in the secreted. Hormone found in the sinus gland of isopods and decapods which controls the blood sugar level. Has a secretagogue action over the amylase released from the midgut gland. May act as a stress hormone and may be involved in the control of molting and reproduction. This Cherax destructor (Common yabby crayfish) protein is Crustacean hyperglycemic hormone B.